The following is a 473-amino-acid chain: Aspartyl/glutamyl-tRNA(Asn/Gln) amidotransferase subunit B (473 aa).

The protein belongs to the GatB/GatE family. GatB subfamily. As to quaternary structure, heterotrimer of A, B and C subunits.

The enzyme catalyses L-glutamyl-tRNA(Gln) + L-glutamine + ATP + H2O = L-glutaminyl-tRNA(Gln) + L-glutamate + ADP + phosphate + H(+). It catalyses the reaction L-aspartyl-tRNA(Asn) + L-glutamine + ATP + H2O = L-asparaginyl-tRNA(Asn) + L-glutamate + ADP + phosphate + 2 H(+). Its function is as follows. Allows the formation of correctly charged Asn-tRNA(Asn) or Gln-tRNA(Gln) through the transamidation of misacylated Asp-tRNA(Asn) or Glu-tRNA(Gln) in organisms which lack either or both of asparaginyl-tRNA or glutaminyl-tRNA synthetases. The reaction takes place in the presence of glutamine and ATP through an activated phospho-Asp-tRNA(Asn) or phospho-Glu-tRNA(Gln). This Wolbachia pipientis subsp. Culex pipiens (strain wPip) protein is Aspartyl/glutamyl-tRNA(Asn/Gln) amidotransferase subunit B.